The chain runs to 183 residues: Photosystem I assembly protein Ycf3 (183 aa).

3 TPR repeats span residues 35–68, 72–105, and 120–153; these read AFIY…EIDS, SYIL…NSFL, and GEQA…SPDN.

This sequence belongs to the Ycf3 family.

Its subcellular location is the plastid. The protein localises to the chloroplast thylakoid membrane. Functionally, essential for the assembly of the photosystem I (PSI) complex. May act as a chaperone-like factor to guide the assembly of the PSI subunits. The chain is Photosystem I assembly protein Ycf3 from Adiantum capillus-veneris (Maidenhair fern).